The primary structure comprises 150 residues: UPF0735 ACT domain-containing protein DSY2247 (150 aa).

In terms of domain architecture, ACT spans 74-149 (TFSLTLENTA…GVRKIEVIGQ (76 aa)).

Belongs to the UPF0735 family.

In Desulfitobacterium hafniense (strain Y51), this protein is UPF0735 ACT domain-containing protein DSY2247.